A 149-amino-acid chain; its full sequence is Large ribosomal subunit protein uL15 (149 aa).

The segment at 1 to 54 (MSLKLHNLKPTPNSRPEKHRKGRGHAAGKGKQAGKGQSGQNKRKGHRLGFEGGQ) is disordered. The segment covering 17 to 28 (EKHRKGRGHAAG) has biased composition (basic residues).

This sequence belongs to the universal ribosomal protein uL15 family. Part of the 50S ribosomal subunit.

Binds to the 23S rRNA. The polypeptide is Large ribosomal subunit protein uL15 (Mycoplasmopsis synoviae (strain 53) (Mycoplasma synoviae)).